The chain runs to 180 residues: Large ribosomal subunit protein uL16 (180 aa).

It belongs to the universal ribosomal protein uL16 family.

The protein is Large ribosomal subunit protein uL16 of Hyperthermus butylicus (strain DSM 5456 / JCM 9403 / PLM1-5).